The chain runs to 437 residues: Enolase 2 (437 aa).

Lys60 is covalently cross-linked (Glycyl lysine isopeptide (Lys-Gly) (interchain with G-Cter in ubiquitin)). A Phosphoserine modification is found at Ser138. His160 is a catalytic residue. Ser188 carries the post-translational modification Phosphoserine. Lys243 is covalently cross-linked (Glycyl lysine isopeptide (Lys-Gly) (interchain with G-Cter in ubiquitin)). Positions 247 and 296 each coordinate Mg(2+). At Thr313 the chain carries Phosphothreonine. Asp321 provides a ligand contact to Mg(2+). The residue at position 324 (Thr324) is a Phosphothreonine. Lys358 is covalently cross-linked (Glycyl lysine isopeptide (Lys-Gly) (interchain with G-Cter in ubiquitin)).

The protein belongs to the enolase family. In terms of assembly, homodimer. Requires Mg(2+) as cofactor.

It is found in the cytoplasm. It catalyses the reaction (2R)-2-phosphoglycerate = phosphoenolpyruvate + H2O. Its pathway is carbohydrate degradation; glycolysis; pyruvate from D-glyceraldehyde 3-phosphate: step 4/5. The protein is Enolase 2 (ENO2) of Saccharomyces cerevisiae (strain ATCC 204508 / S288c) (Baker's yeast).